A 334-amino-acid chain; its full sequence is MILGIESSCDDSSVALIDEETLEQIYYKKISQEEEHAIFGGVVPELAARLHTKALPALLNDILLNLKDINAIAVTNEPGLSVSLIGGVSMAKALSIALNIPLIAVNHLVGHIYSLFLDREATFPLGVLLVSGGHTMILEINENGEILELASTSDDSFGESFDKVAKMLDLGYPGGTVVQENALLCEDKDRFKFTVPLLHDKRLEYSFSGLKNQVRVEISKLKTITQKDIADICYAFENTACEHILNKLEKVFKLRNFKRFGVVGGASANLNLRKRLEVLCQKNVCELLLAPLEFCSDNALMIARAGREKYFKKEFINHSELTINPRVGFKKFEI.

Positions 107 and 111 each coordinate Fe cation. Residues Leu129–Gly133, Asp162, Gly175, and Asn269 contribute to the substrate site. Residue Asp297 coordinates Fe cation.

It belongs to the KAE1 / TsaD family. The cofactor is Fe(2+).

Its subcellular location is the cytoplasm. The enzyme catalyses L-threonylcarbamoyladenylate + adenosine(37) in tRNA = N(6)-L-threonylcarbamoyladenosine(37) in tRNA + AMP + H(+). Functionally, required for the formation of a threonylcarbamoyl group on adenosine at position 37 (t(6)A37) in tRNAs that read codons beginning with adenine. Is involved in the transfer of the threonylcarbamoyl moiety of threonylcarbamoyl-AMP (TC-AMP) to the N6 group of A37, together with TsaE and TsaB. TsaD likely plays a direct catalytic role in this reaction. The sequence is that of tRNA N6-adenosine threonylcarbamoyltransferase from Campylobacter concisus (strain 13826).